A 256-amino-acid polypeptide reads, in one-letter code: Na(+)-translocating NADH-quinone reductase subunit E (256 aa).

6 helical membrane passes run 1–21 (MWLG…AAFI), 50–70 (MSVA…HAFI), 83–103 (LASV…IAAF), 123–143 (GIFL…LFGI), 149–169 (FIPM…AIVI), and 189–209 (MGIS…LTGI). Positions 229-249 (ENTTNPLKESSSKHQPSISKA) are enriched in polar residues. The interval 229-256 (ENTTNPLKESSSKHQPSISKARTQRRSL) is disordered.

It belongs to the NqrDE/RnfAE family. In terms of assembly, composed of six subunits; NqrA, NqrB, NqrC, NqrD, NqrE and NqrF.

The protein resides in the cell inner membrane. The enzyme catalyses a ubiquinone + n Na(+)(in) + NADH + H(+) = a ubiquinol + n Na(+)(out) + NAD(+). In terms of biological role, NQR complex catalyzes the reduction of ubiquinone-1 to ubiquinol by two successive reactions, coupled with the transport of Na(+) ions from the cytoplasm to the periplasm. NqrA to NqrE are probably involved in the second step, the conversion of ubisemiquinone to ubiquinol. The sequence is that of Na(+)-translocating NADH-quinone reductase subunit E from Chlamydia pneumoniae (Chlamydophila pneumoniae).